A 361-amino-acid polypeptide reads, in one-letter code: tRNA-specific 2-thiouridylase MnmA (361 aa).

ATP-binding positions include 11–18 (GMSGGVDS) and methionine 37. Residue cysteine 106 is the Nucleophile of the active site. Cysteine 106 and cysteine 202 form a disulfide bridge. Glycine 130 is a binding site for ATP. The segment at 152–154 (KDQ) is interaction with tRNA. The active-site Cysteine persulfide intermediate is the cysteine 202. Residues 308–309 (RY) form an interaction with tRNA region.

It belongs to the MnmA/TRMU family.

It is found in the cytoplasm. It catalyses the reaction S-sulfanyl-L-cysteinyl-[protein] + uridine(34) in tRNA + AH2 + ATP = 2-thiouridine(34) in tRNA + L-cysteinyl-[protein] + A + AMP + diphosphate + H(+). Its function is as follows. Catalyzes the 2-thiolation of uridine at the wobble position (U34) of tRNA, leading to the formation of s(2)U34. The protein is tRNA-specific 2-thiouridylase MnmA of Clostridium botulinum (strain Alaska E43 / Type E3).